A 367-amino-acid chain; its full sequence is Beta sliding clamp (367 aa).

Belongs to the beta sliding clamp family. In terms of assembly, forms a ring-shaped head-to-tail homodimer around DNA which binds and tethers DNA polymerases and other proteins to the DNA. The DNA replisome complex has a single clamp-loading complex (3 tau and 1 each of delta, delta', psi and chi subunits) which binds 3 Pol III cores (1 core on the leading strand and 2 on the lagging strand) each with a beta sliding clamp dimer. Additional proteins in the replisome are other copies of gamma, psi and chi, Ssb, DNA helicase and RNA primase.

The protein resides in the cytoplasm. Functionally, confers DNA tethering and processivity to DNA polymerases and other proteins. Acts as a clamp, forming a ring around DNA (a reaction catalyzed by the clamp-loading complex) which diffuses in an ATP-independent manner freely and bidirectionally along dsDNA. Initially characterized for its ability to contact the catalytic subunit of DNA polymerase III (Pol III), a complex, multichain enzyme responsible for most of the replicative synthesis in bacteria; Pol III exhibits 3'-5' exonuclease proofreading activity. The beta chain is required for initiation of replication as well as for processivity of DNA replication. This Pseudomonas putida (strain ATCC 47054 / DSM 6125 / CFBP 8728 / NCIMB 11950 / KT2440) protein is Beta sliding clamp (dnaN).